We begin with the raw amino-acid sequence, 376 residues long: Spermidine/putrescine import ATP-binding protein PotA (376 aa).

The ABC transporter domain occupies 6-236 (INIVNVNKSF…PADTFVADFL (231 aa)). 38–45 (GPSGCGKT) contributes to the ATP binding site.

This sequence belongs to the ABC transporter superfamily. Spermidine/putrescine importer (TC 3.A.1.11.1) family. The complex is composed of two ATP-binding proteins (PotA), two transmembrane proteins (PotB and PotC) and a solute-binding protein (PotD).

The protein resides in the cell inner membrane. It carries out the reaction ATP + H2O + polyamine-[polyamine-binding protein]Side 1 = ADP + phosphate + polyamineSide 2 + [polyamine-binding protein]Side 1.. In terms of biological role, part of the ABC transporter complex PotABCD involved in spermidine/putrescine import. Responsible for energy coupling to the transport system. The sequence is that of Spermidine/putrescine import ATP-binding protein PotA from Fusobacterium nucleatum subsp. nucleatum (strain ATCC 25586 / DSM 15643 / BCRC 10681 / CIP 101130 / JCM 8532 / KCTC 2640 / LMG 13131 / VPI 4355).